The primary structure comprises 366 residues: Aminomethyltransferase (366 aa).

Belongs to the GcvT family. In terms of assembly, the glycine cleavage system is composed of four proteins: P, T, L and H.

It carries out the reaction N(6)-[(R)-S(8)-aminomethyldihydrolipoyl]-L-lysyl-[protein] + (6S)-5,6,7,8-tetrahydrofolate = N(6)-[(R)-dihydrolipoyl]-L-lysyl-[protein] + (6R)-5,10-methylene-5,6,7,8-tetrahydrofolate + NH4(+). The glycine cleavage system catalyzes the degradation of glycine. The polypeptide is Aminomethyltransferase (Chlorobium chlorochromatii (strain CaD3)).